We begin with the raw amino-acid sequence, 449 residues long: D-inositol 3-phosphate glycosyltransferase (449 aa).

A 1D-myo-inositol 3-phosphate-binding site is contributed by His43. UDP-N-acetyl-alpha-D-glucosamine is bound by residues 49–50 (QP) and Gly57. Residues 54-59 (DAGGMN), Lys112, Tyr145, Thr169, and Arg189 contribute to the 1D-myo-inositol 3-phosphate site. 3 residues coordinate UDP-N-acetyl-alpha-D-glucosamine: Arg263, Lys268, and Gln324. Mg(2+)-binding residues include Tyr333, Arg334, and Ala336. UDP-N-acetyl-alpha-D-glucosamine contacts are provided by Glu346 and Glu354. Position 360 (Thr360) interacts with Mg(2+).

Belongs to the glycosyltransferase group 1 family. MshA subfamily. Homodimer.

The enzyme catalyses 1D-myo-inositol 3-phosphate + UDP-N-acetyl-alpha-D-glucosamine = 1D-myo-inositol 2-acetamido-2-deoxy-alpha-D-glucopyranoside 3-phosphate + UDP + H(+). Catalyzes the transfer of a N-acetyl-glucosamine moiety to 1D-myo-inositol 3-phosphate to produce 1D-myo-inositol 2-acetamido-2-deoxy-glucopyranoside 3-phosphate in the mycothiol biosynthesis pathway. The chain is D-inositol 3-phosphate glycosyltransferase from Segniliparus rotundus (strain ATCC BAA-972 / CDC 1076 / CIP 108378 / DSM 44985 / JCM 13578).